Reading from the N-terminus, the 59-residue chain is Salivary thrombin inhibitor XC-43 (59 aa).

The N-terminal stretch at 1–23 (MNLQFLFIFIAFCVMLFAQIVTA) is a signal peptide.

In terms of assembly, interacts with human F2 (thrombin). In terms of tissue distribution, salivary gland (at protein level).

The protein localises to the secreted. Functionally, anticoagulant protein that acts as a competitive inhibitor of host thrombin. Inhibits thrombin-mediated host platelet aggregation. The sequence is that of Salivary thrombin inhibitor XC-43 from Xenopsylla cheopis (Oriental rat flea).